The chain runs to 336 residues: Geranylgeranyl pyrophosphate synthase 6, mitochondrial (336 aa).

The transit peptide at 1-22 directs the protein to the mitochondrion; it reads MRPRYSLILSAMRLIRPSNRRL. The isopentenyl diphosphate site is built by K80, R83, and H112. D119 and D125 together coordinate Mg(2+). R130 provides a ligand contact to dimethylallyl diphosphate. R131 lines the isopentenyl diphosphate pocket. Positions 221, 222, 259, 276, and 286 each coordinate dimethylallyl diphosphate.

It belongs to the FPP/GGPP synthase family. As to quaternary structure, monomer. Mg(2+) is required as a cofactor.

The protein localises to the mitochondrion. The catalysed reaction is isopentenyl diphosphate + dimethylallyl diphosphate = (2E)-geranyl diphosphate + diphosphate. It catalyses the reaction isopentenyl diphosphate + (2E)-geranyl diphosphate = (2E,6E)-farnesyl diphosphate + diphosphate. It carries out the reaction isopentenyl diphosphate + (2E,6E)-farnesyl diphosphate = (2E,6E,10E)-geranylgeranyl diphosphate + diphosphate. It functions in the pathway isoprenoid biosynthesis; farnesyl diphosphate biosynthesis; farnesyl diphosphate from geranyl diphosphate and isopentenyl diphosphate: step 1/1. The protein operates within isoprenoid biosynthesis; geranyl diphosphate biosynthesis; geranyl diphosphate from dimethylallyl diphosphate and isopentenyl diphosphate: step 1/1. It participates in isoprenoid biosynthesis; geranylgeranyl diphosphate biosynthesis; geranylgeranyl diphosphate from farnesyl diphosphate and isopentenyl diphosphate: step 1/1. Functionally, catalyzes the trans-addition of the three molecules of IPP onto DMAPP to form geranylgeranyl pyrophosphate. The sequence is that of Geranylgeranyl pyrophosphate synthase 6, mitochondrial from Arabidopsis thaliana (Mouse-ear cress).